A 217-amino-acid chain; its full sequence is Claudin-9 (217 aa).

At M1–T12 the chain is on the cytoplasmic side. The chain crosses the membrane as a helical span at residues L13 to T33. Topologically, residues A34–R81 are extracellular. Residues A82–A102 traverse the membrane as a helical segment. The Cytoplasmic segment spans residues Q103–R116. The helical transmembrane segment at I117 to C137 threads the bilayer. At W138–E159 the chain is on the extracellular side. Residues L160 to L180 form a helical membrane-spanning segment. Over L181–V217 the chain is Cytoplasmic.

This sequence belongs to the claudin family. As to quaternary structure, interacts with CLDN1, CD81 and OCLN.

It localises to the cell junction. The protein localises to the tight junction. Its subcellular location is the cell membrane. Functionally, plays a major role in tight junction-specific obliteration of the intercellular space, through calcium-independent cell-adhesion activity. The polypeptide is Claudin-9 (Cldn9) (Mus musculus (Mouse)).